We begin with the raw amino-acid sequence, 95 residues long: Putative septation protein SpoVG (95 aa).

Belongs to the SpoVG family.

Functionally, could be involved in septation. The chain is Putative septation protein SpoVG from Clostridium acetobutylicum (strain ATCC 824 / DSM 792 / JCM 1419 / IAM 19013 / LMG 5710 / NBRC 13948 / NRRL B-527 / VKM B-1787 / 2291 / W).